Consider the following 681-residue polypeptide: PTS system glucose-specific EIICBA component (681 aa).

One can recognise a PTS EIIC type-1 domain in the interval 3–414; the sequence is KKLFGQLQRI…LKYKTPGRED (412 aa). 10 helical membrane-spanning segments follow: residues 16-36, 73-93, 126-146, 170-190, 199-219, 273-293, 303-323, 328-348, 355-375, and 383-403; these read LMLP…GTAM, MIFA…AAIA, ILGI…GALA, FVPI…ALIW, AFST…FGFI, FMQG…LAIY, VVAG…ITEP, FLFV…LSFL, LHLG…GILP, and VIPV…FLIV. The PTS EIIB type-1 domain occupies 425–506; that stretch reads TELPYAVLEA…QQIMNGQVVE (82 aa). Cys-447 serves as the catalytic Phosphocysteine intermediate; for EIIB activity. The 105-residue stretch at 551-655 folds into the PTS EIIA type-1 domain; it reads DQVFSEKMMG…SDITPIIVTQ (105 aa). His-603 (tele-phosphohistidine intermediate; for EIIA activity) is an active-site residue.

The protein localises to the cell membrane. The catalysed reaction is N(pros)-phospho-L-histidyl-[protein] + D-glucose(out) = D-glucose 6-phosphate(in) + L-histidyl-[protein]. In terms of biological role, the phosphoenolpyruvate-dependent sugar phosphotransferase system (sugar PTS), a major carbohydrate active transport system, catalyzes the phosphorylation of incoming sugar substrates concomitantly with their translocation across the cell membrane. This system is involved in glucose transport. The polypeptide is PTS system glucose-specific EIICBA component (ptsG) (Staphylococcus aureus (strain MRSA252)).